Here is a 69-residue protein sequence, read N- to C-terminus: UPF0150 protein ssr1258 (69 aa).

This sequence belongs to the UPF0150 family.

This chain is UPF0150 protein ssr1258, found in Synechocystis sp. (strain ATCC 27184 / PCC 6803 / Kazusa).